The chain runs to 501 residues: MMDPAAGSGPDGAAVVPPELPALPVAAEDPMALYRQVLRDFKELFFCLEPMEITRYVHRNEGRCLSLGPPKGWHVMLRTEDGIITAAKQAASKLICCREPLTPLGYAVILLPEPRRDHHDGMVATPYVVFMGRFSRVYAYDTREKYMVLVSHNLDELARYGVSRSEIAYRDVIHTTLRRMTVPVPRRYPKGARTMHVLFLNDTTPEGSYATAERILGCDVKLHTPGYGTVIMRLMKTVQQLHRIWPFCALTEVESRRWWWAVRANLATPWYVLGVTGRPRPGRSFVAEVLVLLDWFGAVYAIQMDDPNHYVRRVANTITEFFRMGLLKMVFRHRRFERERQRQTRMEHRHLCPHHHERAVDHKRDILFNEDAALPDERRERERRILQQQYDWLCLTERFDPHEGAWERLDPNTLVLHRYDTNSQSYVLDPDIVGVEAAEREAAGHQDDTGPRLHCLVTTRSSTREGAERVITALVHQSRLVTYSDPFPLKSLTGVREYIQI.

Belongs to the herpesviridae US22 family.

It localises to the virion tegument. The polypeptide is Tegument protein US24 (US24) (Human cytomegalovirus (strain Merlin) (HHV-5)).